Here is a 173-residue protein sequence, read N- to C-terminus: Lens fiber membrane intrinsic protein (173 aa).

The Cytoplasmic segment spans residues 1–3; the sequence is MYS. Residues 4–24 form a helical membrane-spanning segment; that stretch reads FMGGGLFCAWVGTILLVVATA. Residues 25–66 lie on the Extracellular side of the membrane; that stretch reads TDHWMQYRLSGSFAHQGLWRYCLGNKCFLQTESIAYWNATRA. C-linked (Man) tryptophan glycans are attached at residues tryptophan 43 and tryptophan 61. A glycan (N-linked (GlcNAc...) asparagine) is linked at asparagine 62. Residues 67–87 traverse the membrane as a helical segment; that stretch reads FMILSALCATSGIIMGVLAFA. Residues 88–98 are Cytoplasmic-facing; sequence QQSTFTRLSRP. A helical membrane pass occupies residues 99-119; the sequence is FSAGIMFFASTLFVLLALAIY. Residues 120–140 are Extracellular-facing; sequence TGVTVSFLGRRFGDWRFSWSY. The helical transmembrane segment at 141-161 threads the bilayer; sequence ILGWVALLMTFFAGIFYMCAY. At 162–173 the chain is on the cytoplasmic side; the sequence is RMHECRRLATPR. Threonine 171 is subject to Phosphothreonine.

Belongs to the PMP-22/EMP/MP20 family. Seems to be associated with itself or another lens membrane component via disulfide bonds.

The protein localises to the membrane. In terms of biological role, present in the thicker 16-17 nm junctions of mammalian lens fiber cells, where it may contribute to cell junctional organization. Acts as a receptor for calmodulin. May play an important role in both lens development and cataractogenesis. The protein is Lens fiber membrane intrinsic protein (Lim2) of Mus musculus (Mouse).